We begin with the raw amino-acid sequence, 117 residues long: Pre-mRNA-splicing factor ini1 (117 aa).

This sequence belongs to the PHF5 family.

Its subcellular location is the nucleus. Functionally, required for pre-mRNA splicing. This chain is Pre-mRNA-splicing factor ini1 (ini1), found in Schizosaccharomyces pombe (strain 972 / ATCC 24843) (Fission yeast).